Consider the following 282-residue polypeptide: Shikimate dehydrogenase (NADP(+)) (282 aa).

Shikimate-binding positions include 24–26 (SRS) and T71. Residue K75 is the Proton acceptor of the active site. D87 contacts NADP(+). 2 residues coordinate shikimate: N96 and D112. NADP(+) contacts are provided by residues 138-142 (GAGGA), 162-167 (NRTRIR), and L227. Y229 contacts shikimate. G250 serves as a coordination point for NADP(+).

Belongs to the shikimate dehydrogenase family. As to quaternary structure, homodimer.

The catalysed reaction is shikimate + NADP(+) = 3-dehydroshikimate + NADPH + H(+). Its pathway is metabolic intermediate biosynthesis; chorismate biosynthesis; chorismate from D-erythrose 4-phosphate and phosphoenolpyruvate: step 4/7. Its function is as follows. Involved in the biosynthesis of the chorismate, which leads to the biosynthesis of aromatic amino acids. Catalyzes the reversible NADPH linked reduction of 3-dehydroshikimate (DHSA) to yield shikimate (SA). This Paracoccus denitrificans (strain Pd 1222) protein is Shikimate dehydrogenase (NADP(+)).